A 356-amino-acid chain; its full sequence is Aminodeoxyfutalosine deaminase (356 aa).

H18 and H20 together coordinate Zn(2+). Positions 73, 140, and 172 each coordinate substrate. H199 provides a ligand contact to Zn(2+). E202 (proton donor) is an active-site residue. D287 serves as a coordination point for Zn(2+).

It belongs to the metallo-dependent hydrolases superfamily. Adenosine and AMP deaminases family. Zn(2+) serves as cofactor.

It catalyses the reaction 6-amino-6-deoxyfutalosine + H2O + H(+) = futalosine + NH4(+). The protein operates within quinol/quinone metabolism; menaquinone biosynthesis. In terms of biological role, catalyzes the deamination of aminodeoxyfutalosine (AFL) into futalosine (FL), a step in the biosynthesis of menaquinone (MK, vitamin K2). Is very poorly efficient on 1-(6-amino-9H-purin-9-yl)-1-deoxy-N-ethyl-beta-D-ribofuranuronamide (NECA), adenosine, 5'-methylthioadenosine, 5'-deoxyadenosine, 2'-deoxyadenosine, and AMP as substrate. The protein is Aminodeoxyfutalosine deaminase of Acidothermus cellulolyticus (strain ATCC 43068 / DSM 8971 / 11B).